Here is a 119-residue protein sequence, read N- to C-terminus: Large ribosomal subunit protein bL20 (119 aa).

This sequence belongs to the bacterial ribosomal protein bL20 family.

Functionally, binds directly to 23S ribosomal RNA and is necessary for the in vitro assembly process of the 50S ribosomal subunit. It is not involved in the protein synthesizing functions of that subunit. This chain is Large ribosomal subunit protein bL20, found in Dehalococcoides mccartyi (strain ATCC BAA-2266 / KCTC 15142 / 195) (Dehalococcoides ethenogenes (strain 195)).